We begin with the raw amino-acid sequence, 948 residues long: Putative helicase 009L (948 aa).

Residues 64–243 (LSEDTPYREL…ADVLNLILPQ (180 aa)) form the Helicase ATP-binding domain. 77–84 (HAPGTGKT) is an ATP binding site. Positions 187 to 190 (DEVH) match the DEAH box motif. Residues 371-554 (VKYDYLVRVA…AVERILMTSA (184 aa)) enclose the Helicase C-terminal domain.

The protein is Putative helicase 009L of Frog virus 3 (isolate Goorha) (FV-3).